A 545-amino-acid chain; its full sequence is Ubiquitin carboxyl-terminal hydrolase 17-like protein D (545 aa).

Residues 51–348 (CGLQNTGNSC…NAYVLFYVQQ (298 aa)) form the USP domain. Cysteine 60 serves as the catalytic Nucleophile. Residue histidine 307 is the Proton acceptor of the active site. Disordered regions lie at residues 367–443 (LDPE…KLGQ) and 521–545 (RQEG…LLVR). The segment covering 374–385 (KKSRRKKHKKKS) has biased composition (basic residues). Residues 393–404 (EPSKNREKKATK) show a composition bias toward basic and acidic residues. Over residues 524-537 (GRRRSKKGKNKNKQ) the composition is skewed to basic residues.

It belongs to the peptidase C19 family. USP17 subfamily. Detected in T-cell, myeloid, and embryonic stem cell lines.

It localises to the nucleus. The protein resides in the endoplasmic reticulum. It catalyses the reaction Thiol-dependent hydrolysis of ester, thioester, amide, peptide and isopeptide bonds formed by the C-terminal Gly of ubiquitin (a 76-residue protein attached to proteins as an intracellular targeting signal).. In terms of biological role, deubiquitinating enzyme that removes conjugated ubiquitin from specific proteins to regulate different cellular processes that may include cell proliferation, progression through the cell cycle, apoptosis, cell migration, and the cellular response to viral infection. The sequence is that of Ubiquitin carboxyl-terminal hydrolase 17-like protein D from Mus musculus (Mouse).